A 296-amino-acid polypeptide reads, in one-letter code: NAD kinase (296 aa).

Aspartate 73 (proton acceptor) is an active-site residue. Residues 73–74, lysine 78, 151–152, arginine 178, aspartate 180, and 191–196 each bind NAD(+); these read DG, NE, and TAHAMS.

The protein belongs to the NAD kinase family. A divalent metal cation serves as cofactor.

The protein resides in the cytoplasm. The enzyme catalyses NAD(+) + ATP = ADP + NADP(+) + H(+). Involved in the regulation of the intracellular balance of NAD and NADP, and is a key enzyme in the biosynthesis of NADP. Catalyzes specifically the phosphorylation on 2'-hydroxyl of the adenosine moiety of NAD to yield NADP. The polypeptide is NAD kinase (Francisella tularensis subsp. tularensis (strain WY96-3418)).